We begin with the raw amino-acid sequence, 400 residues long: Putative zinc-binding protein ORF78 (400 aa).

The tract at residues 9 to 33 (LPRKRRAVAQPRTRQPPPKVHREDT) is disordered.

In Ictalurid herpesvirus 1 (strain Auburn) (IcHV-1), this protein is Putative zinc-binding protein ORF78 (ORF78).